Reading from the N-terminus, the 284-residue chain is MSYYTNEQSGGEKKTRKSSSSKRSDRKDSASSSPPPPGAVRGRVMYPPGYDGDAWLSRRERRESSGSSDSSSSSRDDDDRRQPEQQPKAQSTRERRKSQTTVTTRRKTDRGDGGKSSNSNGPWSIDNQCANLVKRLSLAKGFGPSATPASDSDRWRTTTNPANRSAFVQAVSVTAMAQGELAARAAWEKYKPRNNEDLEKLVETLEIKITVNPGRGLWDVASNIASAIRNGQPITHDLLYASSPAGDGARTSRRQSCRSKSMPRGDEEDERDAGSPRPPSSRRR.

Disordered regions lie at residues 1–126 and 239–284; these read MSYY…WSID and LYAS…SRRR. Over residues 74–83 the composition is skewed to basic and acidic residues; it reads SRDDDDRRQP. Residues 94–108 show a composition bias toward basic residues; sequence ERRKSQTTVTTRRKT. Over residues 115–126 the composition is skewed to polar residues; sequence KSSNSNGPWSID.

Belongs to the alphaherpesvirinae VP22 tegument protein family. As to quaternary structure, interacts with gE (via C-terminus); this interaction is necessary for the recruitment of VP22 to the Golgi and its packaging into virions. Interacts with gM (via C-terminus). Interacts with VP16; this interaction allows the formation of a tripartite complex composed of VP16, VP22 and UL41/VHS. Interacts with the capsid-binding protein UL16. Interacts with host CGAS. In terms of processing, highly phosphorylated in the host cell. Packaging is selective for underphosphorylated forms.

It is found in the virion tegument. The protein localises to the host cytoplasm. Its subcellular location is the host nucleus. It localises to the host Golgi apparatus. Tegument protein that plays different roles during the time course of infection. Participates in both the accumulation of viral mRNAs and viral protein translation at late time of infection. Modulates the RNase activity of the virion host shutoff protein UL41 probably to ensure necessary levels of key cellular mRNAs and proteins. Plays a role in microtubule reorganization that occurs after viral infection by stabilizing microtubule network. Plays a role in the inhibition of host innate immune system by targeting the CGAS enzymatic activity which is the principal cytosolic DNA sensor that detects invading viral DNA. Acts by mediating disruption of liquid-like droplets in which CGAS is activated, thereby preventing CGAS activity. The chain is Tegument protein VP22 (UL49) from Amazona oratrix (yellow-headed parrot).